The chain runs to 333 residues: Adenosine deaminase (333 aa).

Positions 12 and 14 each coordinate Zn(2+). His14, Asp16, and Gly170 together coordinate substrate. His197 lines the Zn(2+) pocket. The Proton donor role is filled by Glu200. Asp278 is a binding site for Zn(2+). Asp279 lines the substrate pocket.

It belongs to the metallo-dependent hydrolases superfamily. Adenosine and AMP deaminases family. Adenosine deaminase subfamily. Requires Zn(2+) as cofactor.

The enzyme catalyses adenosine + H2O + H(+) = inosine + NH4(+). It carries out the reaction 2'-deoxyadenosine + H2O + H(+) = 2'-deoxyinosine + NH4(+). Its function is as follows. Catalyzes the hydrolytic deamination of adenosine and 2-deoxyadenosine. This chain is Adenosine deaminase, found in Escherichia coli (strain SMS-3-5 / SECEC).